We begin with the raw amino-acid sequence, 178 residues long: Large ribosomal subunit protein uL13m (178 aa).

The protein belongs to the universal ribosomal protein uL13 family. As to quaternary structure, component of the mitochondrial ribosome large subunit (39S) which comprises a 16S rRNA and about 50 distinct proteins. Interacts with OXA1L.

Its subcellular location is the mitochondrion. The chain is Large ribosomal subunit protein uL13m (MRPL13) from Bos taurus (Bovine).